The chain runs to 236 residues: Leucyl/phenylalanyl-tRNA--protein transferase (236 aa).

It belongs to the L/F-transferase family.

The protein resides in the cytoplasm. The enzyme catalyses N-terminal L-lysyl-[protein] + L-leucyl-tRNA(Leu) = N-terminal L-leucyl-L-lysyl-[protein] + tRNA(Leu) + H(+). The catalysed reaction is N-terminal L-arginyl-[protein] + L-leucyl-tRNA(Leu) = N-terminal L-leucyl-L-arginyl-[protein] + tRNA(Leu) + H(+). It carries out the reaction L-phenylalanyl-tRNA(Phe) + an N-terminal L-alpha-aminoacyl-[protein] = an N-terminal L-phenylalanyl-L-alpha-aminoacyl-[protein] + tRNA(Phe). Functions in the N-end rule pathway of protein degradation where it conjugates Leu, Phe and, less efficiently, Met from aminoacyl-tRNAs to the N-termini of proteins containing an N-terminal arginine or lysine. This Yersinia pseudotuberculosis serotype O:1b (strain IP 31758) protein is Leucyl/phenylalanyl-tRNA--protein transferase.